The following is a 137-amino-acid chain: Large-conductance mechanosensitive channel (137 aa).

At 1 to 16 (MSIIKEFREFAMRGNV) the chain is on the cytoplasmic side. The helical transmembrane segment at 17 to 45 (VDLAVGVIIGALFGKIVSSLVSDIIMPPL) threads the bilayer. Topologically, residues 46–74 (GLLIGGVDFKQFALFLRNAQGGIPAVVMN) are periplasmic. Residues 75 to 94 (YGAFIQNIFDFIIVAFAIFI) traverse the membrane as a helical segment. The Cytoplasmic segment spans residues 95 to 137 (AIKLMNKMRCKQEDTPAAPPKPSAEEKLLAEIRDLLKEQQTRQ).

The protein belongs to the MscL family. Homopentamer.

The protein resides in the cell inner membrane. Its function is as follows. Channel that opens in response to stretch forces in the membrane lipid bilayer. Forms a nonselective ion channel with a conductance of about 4 nanosiemens. May participate in the regulation of osmotic pressure changes within the cell. The protein is Large-conductance mechanosensitive channel of Pectobacterium carotovorum (Erwinia carotovora).